The primary structure comprises 385 residues: Queuine tRNA-ribosyltransferase (385 aa).

Catalysis depends on Asp-93, which acts as the Proton acceptor. Substrate contacts are provided by residues 93-97, Asp-147, Gln-191, and Gly-218; that span reads DSGGF. The RNA binding stretch occupies residues 249 to 255; it reads GVGKPED. Asp-268 acts as the Nucleophile in catalysis. Residues 273-277 form an RNA binding; important for wobble base 34 recognition region; sequence TRNAR. Cys-306, Cys-308, Cys-311, and His-337 together coordinate Zn(2+).

Belongs to the queuine tRNA-ribosyltransferase family. Homodimer. Within each dimer, one monomer is responsible for RNA recognition and catalysis, while the other monomer binds to the replacement base PreQ1. Requires Zn(2+) as cofactor.

The enzyme catalyses 7-aminomethyl-7-carbaguanine + guanosine(34) in tRNA = 7-aminomethyl-7-carbaguanosine(34) in tRNA + guanine. It functions in the pathway tRNA modification; tRNA-queuosine biosynthesis. Functionally, catalyzes the base-exchange of a guanine (G) residue with the queuine precursor 7-aminomethyl-7-deazaguanine (PreQ1) at position 34 (anticodon wobble position) in tRNAs with GU(N) anticodons (tRNA-Asp, -Asn, -His and -Tyr). Catalysis occurs through a double-displacement mechanism. The nucleophile active site attacks the C1' of nucleotide 34 to detach the guanine base from the RNA, forming a covalent enzyme-RNA intermediate. The proton acceptor active site deprotonates the incoming PreQ1, allowing a nucleophilic attack on the C1' of the ribose to form the product. After dissociation, two additional enzymatic reactions on the tRNA convert PreQ1 to queuine (Q), resulting in the hypermodified nucleoside queuosine (7-(((4,5-cis-dihydroxy-2-cyclopenten-1-yl)amino)methyl)-7-deazaguanosine). The chain is Queuine tRNA-ribosyltransferase from Pasteurella multocida (strain Pm70).